A 296-amino-acid chain; its full sequence is Nucleotide-binding protein M28_Spy0517 (296 aa).

13 to 20 (GMSGAGKT) serves as a coordination point for ATP. 63–66 (DMRS) contacts GTP.

Belongs to the RapZ-like family.

In terms of biological role, displays ATPase and GTPase activities. In Streptococcus pyogenes serotype M28 (strain MGAS6180), this protein is Nucleotide-binding protein M28_Spy0517.